The primary structure comprises 129 residues: uncharacterized protein (129 aa).

The HIT domain maps to 3–109 (IFCKIINGEI…IPRYEGDGEV (107 aa)). Positions 94 to 98 (HVHFH) match the Histidine triad motif motif.

This is an uncharacterized protein from Methanocaldococcus jannaschii (strain ATCC 43067 / DSM 2661 / JAL-1 / JCM 10045 / NBRC 100440) (Methanococcus jannaschii).